A 260-amino-acid chain; its full sequence is Proteasome subunit alpha type-1 (260 aa).

A disordered region spans residues 231 to 260; the sequence is FLEGLEERPQRKPALPADEPAEKAEEPMEH. Residues 250–260 show a composition bias toward basic and acidic residues; that stretch reads PAEKAEEPMEH.

This sequence belongs to the peptidase T1A family. As to quaternary structure, the 26S proteasome consists of a 20S proteasome core and two 19S regulatory subunits. The 20S proteasome core is a barrel-shaped complex made of 28 subunits that are arranged in four stacked rings. The two outer rings are each formed by seven alpha subunits, and the two inner rings are formed by seven beta subunits. The proteolytic activity is exerted by three beta-subunits PSMB5, PSMB6 and PSMB7.

It is found in the cytoplasm. The protein localises to the nucleus. Component of the 20S core proteasome complex involved in the proteolytic degradation of most intracellular proteins. This complex plays numerous essential roles within the cell by associating with different regulatory particles. Associated with two 19S regulatory particles, forms the 26S proteasome and thus participates in the ATP-dependent degradation of ubiquitinated proteins. The 26S proteasome plays a key role in the maintenance of protein homeostasis by removing misfolded or damaged proteins that could impair cellular functions, and by removing proteins whose functions are no longer required. Associated with the PA200 or PA28, the 20S proteasome mediates ubiquitin-independent protein degradation. This type of proteolysis is required in several pathways including spermatogenesis (20S-PA200 complex) or generation of a subset of MHC class I-presented antigenic peptides (20S-PA28 complex). This Gallus gallus (Chicken) protein is Proteasome subunit alpha type-1 (PSMA1).